A 78-amino-acid polypeptide reads, in one-letter code: MNRTKLVLGAVILASTMLAGCSSNAKIDQLSSDVQTLNAKVDQLSNDVNAVRADVQAAKDDAARANQRLDNQAQAYKK.

The first 20 residues, 1 to 20, serve as a signal peptide directing secretion; sequence MNRTKLVLGAVILASTMLAG. Cys-21 carries the N-palmitoyl cysteine lipid modification. Cys-21 carries the S-diacylglycerol cysteine lipid modification. 2 consecutive repeats follow at residues 24–34 and 38–48; these read NAKIDQLSSDV and NAKVDQLSNDV. A coiled-coil region spans residues 27–75; that stretch reads IDQLSSDVQTLNAKVDQLSNDVNAVRADVQAAKDDAARANQRLDNQAQA. At Lys-78 the chain carries N6-murein peptidoglycan lysine.

Belongs to the Lpp family. In terms of assembly, homotrimer.

It localises to the cell outer membrane. It is found in the secreted. Its subcellular location is the cell wall. Its function is as follows. A highly abundant outer membrane lipoprotein that controls the distance between the inner and outer membranes. The only protein known to be covalently linked to the peptidoglycan network (PGN). Also non-covalently binds the PGN. The link between the cell outer membrane and PGN contributes to maintenance of the structural and functional integrity of the cell envelope, and maintains the correct distance between the PGN and the outer membrane. In Yersinia pestis, this protein is Major outer membrane lipoprotein Lpp.